The primary structure comprises 288 residues: Peptidyl-tRNA hydrolase, chloroplastic (288 aa).

Residues 1–55 constitute a chloroplast transit peptide; sequence MKAVAFPAKIANLSFPSNCCSLFFRSPATFLSPALPCRKLTKGIRGLEGLMSQCL. Tyrosine 107 contacts tRNA. The Proton acceptor role is filled by histidine 112. Positions 157, 159, and 205 each coordinate tRNA.

The protein belongs to the PTH family. Monomer.

It is found in the plastid. The protein resides in the chloroplast stroma. The enzyme catalyses an N-acyl-L-alpha-aminoacyl-tRNA + H2O = an N-acyl-L-amino acid + a tRNA + H(+). In terms of biological role, the natural substrate for this enzyme may be peptidyl-tRNAs which drop off the ribosome during protein synthesis. This chain is Peptidyl-tRNA hydrolase, chloroplastic, found in Arabidopsis thaliana (Mouse-ear cress).